We begin with the raw amino-acid sequence, 24 residues long: Brevinin-1PTb (24 aa).

Residues cysteine 18 and cysteine 24 are joined by a disulfide bond.

In terms of tissue distribution, expressed by the skin glands.

The protein localises to the secreted. Has antibacterial activity against the Gram-positive bacterium S.aureus ATCC 25923 and the Gram-negative bacterium E.coli ATCC 25726. The sequence is that of Brevinin-1PTb from Pulchrana picturata (Malaysian fire frog).